Here is a 433-residue protein sequence, read N- to C-terminus: Glutamate-1-semialdehyde 2,1-aminomutase (433 aa).

Lysine 266 carries the N6-(pyridoxal phosphate)lysine modification.

The protein belongs to the class-III pyridoxal-phosphate-dependent aminotransferase family. HemL subfamily. As to quaternary structure, homodimer. Pyridoxal 5'-phosphate serves as cofactor.

The protein localises to the cytoplasm. The catalysed reaction is (S)-4-amino-5-oxopentanoate = 5-aminolevulinate. It functions in the pathway porphyrin-containing compound metabolism; protoporphyrin-IX biosynthesis; 5-aminolevulinate from L-glutamyl-tRNA(Glu): step 2/2. The sequence is that of Glutamate-1-semialdehyde 2,1-aminomutase from Psychrobacter cryohalolentis (strain ATCC BAA-1226 / DSM 17306 / VKM B-2378 / K5).